The sequence spans 277 residues: MPIVKVKPTSAGRRAVVKVVNPDLHKGAPHAALVEKKNSTGGRNHNGHITTRHRGGGHKKHYRLIDFRRNKDGIPAKVERIEYDPNRTAHIALLCYADGERRYIIAPRGVKVGAVLLSGSEAPIKAGNALPIRNIPVGTTIHCVEMQPGKGAQMVRSAGASAMLLAREGVYAQLRLRSGEIRLVHVDCRATVGEVGNEEHSLRKLGKAGATRWRGIRPTVRGTAMNPIDHPHGGGEGRTGEGRVPVSPWGTPAKGFRTRRNKRTDNMIVRRRYSNKG.

2 disordered regions span residues Lys37 to Lys59 and Arg221 to Asp265. Residues Thr50–Lys59 show a composition bias toward basic residues. The span at Asp229–Glu241 shows a compositional bias: basic and acidic residues.

This sequence belongs to the universal ribosomal protein uL2 family. Part of the 50S ribosomal subunit. Forms a bridge to the 30S subunit in the 70S ribosome.

Its function is as follows. One of the primary rRNA binding proteins. Required for association of the 30S and 50S subunits to form the 70S ribosome, for tRNA binding and peptide bond formation. It has been suggested to have peptidyltransferase activity; this is somewhat controversial. Makes several contacts with the 16S rRNA in the 70S ribosome. This is Large ribosomal subunit protein uL2 from Chromobacterium violaceum (strain ATCC 12472 / DSM 30191 / JCM 1249 / CCUG 213 / NBRC 12614 / NCIMB 9131 / NCTC 9757 / MK).